A 257-amino-acid chain; its full sequence is Acetylglutamate kinase (257 aa).

Substrate is bound by residues 43–44 (GG), Arg65, and Asn157. ATP contacts are provided by residues 180-185 (DVSGIL) and 208-210 (IIT).

It belongs to the acetylglutamate kinase family. ArgB subfamily. Homodimer.

The protein localises to the cytoplasm. The enzyme catalyses N-acetyl-L-glutamate + ATP = N-acetyl-L-glutamyl 5-phosphate + ADP. It participates in amino-acid biosynthesis; L-arginine biosynthesis; N(2)-acetyl-L-ornithine from L-glutamate: step 2/4. Functionally, catalyzes the ATP-dependent phosphorylation of N-acetyl-L-glutamate. This is Acetylglutamate kinase from Photorhabdus laumondii subsp. laumondii (strain DSM 15139 / CIP 105565 / TT01) (Photorhabdus luminescens subsp. laumondii).